The chain runs to 226 residues: Large ribosomal subunit protein uL1 (226 aa).

It belongs to the universal ribosomal protein uL1 family. Part of the 50S ribosomal subunit.

Functionally, binds directly to 23S rRNA. The L1 stalk is quite mobile in the ribosome, and is involved in E site tRNA release. In terms of biological role, protein L1 is also a translational repressor protein, it controls the translation of the L11 operon by binding to its mRNA. The protein is Large ribosomal subunit protein uL1 of Mycoplasma genitalium (strain ATCC 33530 / DSM 19775 / NCTC 10195 / G37) (Mycoplasmoides genitalium).